A 387-amino-acid polypeptide reads, in one-letter code: NifS-like protein (387 aa).

Pyridoxal 5'-phosphate is bound by residues 58–59 (SE) and 184–186 (SIN).

It belongs to the class-V pyridoxal-phosphate-dependent aminotransferase family. NifS/IscS subfamily. It depends on pyridoxal 5'-phosphate as a cofactor.

Its subcellular location is the virion. The polypeptide is NifS-like protein (African swine fever virus (isolate Tick/South Africa/Pretoriuskop Pr4/1996) (ASFV)).